Reading from the N-terminus, the 223-residue chain is Putative N-acetylmannosamine-6-phosphate 2-epimerase (223 aa).

The protein belongs to the NanE family.

It catalyses the reaction an N-acyl-D-glucosamine 6-phosphate = an N-acyl-D-mannosamine 6-phosphate. Its pathway is amino-sugar metabolism; N-acetylneuraminate degradation; D-fructose 6-phosphate from N-acetylneuraminate: step 3/5. In terms of biological role, converts N-acetylmannosamine-6-phosphate (ManNAc-6-P) to N-acetylglucosamine-6-phosphate (GlcNAc-6-P). This chain is Putative N-acetylmannosamine-6-phosphate 2-epimerase, found in Staphylococcus haemolyticus (strain JCSC1435).